A 180-amino-acid chain; its full sequence is Probable cobalt-precorrin-6B C(15)-methyltransferase (decarboxylating) (180 aa).

Residues Thr-16, 40–44, Asp-61, and Ala-89 each bind S-adenosyl-L-methionine; that span reads GCGSG.

This sequence belongs to the methyltransferase superfamily. Archaeal-type CbiT family.

It carries out the reaction Co-precorrin-6B + S-adenosyl-L-methionine = Co-precorrin-7 + S-adenosyl-L-homocysteine + CO2. Its pathway is cofactor biosynthesis; adenosylcobalamin biosynthesis; cob(II)yrinate a,c-diamide from sirohydrochlorin (anaerobic route): step 8/10. Functionally, catalyzes the methylation of C-15 in cobalt-precorrin-6B followed by the decarboxylation of C-12 to form cobalt-precorrin-7. The polypeptide is Probable cobalt-precorrin-6B C(15)-methyltransferase (decarboxylating) (Methanococcus vannielii (strain ATCC 35089 / DSM 1224 / JCM 13029 / OCM 148 / SB)).